The primary structure comprises 441 residues: Membrane-bound protease PH1510 (441 aa).

The first 20 residues, 1–20 (MRRILLSMIVLIFLASPILA), serve as a signal peptide directing secretion. A substrate-binding site is contributed by 64–67 (GGRA). S97 (nucleophile) is an active-site residue. 119 to 124 (ACRPIL) contacts substrate. K138 acts as the Proton donor/acceptor in catalysis. The next 4 membrane-spanning stretches (helical) occupy residues 239–259 (VAYL…LTPG), 271–291 (IILA…ILLI), 307–327 (FGLF…LLFG), and 344–364 (ILII…MAAV).

It belongs to the peptidase S14 family. As to quaternary structure, homodimer.

The protein resides in the membrane. Inhibited by divalent metal cations, including Mg(2+), Mn(2+), Ca(2+) and Zn(2+). Mildly inhibited by 0.01 % SDS and 0.1% dodecyl-beta-D-maltoside. Activity is nearly abolished by 1 % SDS. Functionally, protease that cleaves its substrates preferentially near hydrophobic or aromatic amino acid residues. Can degrade casein and the stomatin homolog PH1511 (in vitro). In Pyrococcus horikoshii (strain ATCC 700860 / DSM 12428 / JCM 9974 / NBRC 100139 / OT-3), this protein is Membrane-bound protease PH1510.